Consider the following 576-residue polypeptide: MAASETVRLRLQFDYPPPATPHCTAFWLLVDLNRCRVVTDLISLIRQRFGFSSGAFLGLYLEGGLLPPAESARLVRDNDCLRVKLEERGVAENSVVISNGDINLSLRKAKKRAFQLEEGEETEPDCKYSKKHWKSRENNNNNEKVLDLEPKAVTDQTVSKKNKRKNKATCGTVGDDNEEAKRKSPKKKEKCEYKKKAKNPKSPKVQAVKDWANQRCSSPKGSARNSLVKAKRKGSVSVCSKESPSSSSESESCDESISDGPSKVTLEARNSSEKLPTELSKEEPSTKNTTADKLAIKLGFSLTPSKGKTSGTTSSSSDSSAESDDQCLMSSSTPECAAGFLKTVGLFAGRGRPGPGLSSQTAGAAGWRRSGSNGGGQAPGASPSVSLPASLGRGWGREENLFSWKGAKGRGMRGRGRGRGHPVSCVVNRSTDNQRQQQLNDVVKNSSTIIQNPVETPKKDYSLLPLLAAAPQVGEKIAFKLLELTSSYSPDVSDYKEGRILSHNPETQQVDIEILSSLPALREPGKFDLVYHNENGAEVVEYAVTQESKITVFWKELIDPRLIIESPSNTSSTEPA.

Serine 105 is modified (phosphoserine). At threonine 122 the chain carries Phosphothreonine. Disordered regions lie at residues 125 to 330 and 352 to 389; these read DCKY…CLMS and RPGP…SLPA. Glycyl lysine isopeptide (Lys-Gly) (interchain with G-Cter in SUMO2) cross-links involve residues lysine 127, lysine 151, and lysine 160. Position 184 is a phosphoserine; by VRK1 and VRK2 (serine 184). Glycyl lysine isopeptide (Lys-Gly) (interchain with G-Cter in SUMO2) cross-links involve residues lysine 204 and lysine 209. Positions 214–225 are enriched in polar residues; sequence QRCSSPKGSARN. One copy of the 1-1 repeat lies at 223-226; that stretch reads ARNS. The tract at residues 223-271 is 2 X 4 AA repeats of A-R-N-S; sequence ARNSLVKAKRKGSVSVCSKESPSSSSESESCDESISDGPSKVTLEARNS. Over residues 235 to 250 the composition is skewed to low complexity; sequence SVSVCSKESPSSSSES. 5 positions are modified to phosphoserine: serine 248, serine 250, serine 256, serine 271, and serine 272. The stretch at 268 to 271 is one 1-2 repeat; that stretch reads ARNS. A compositionally biased stretch (basic and acidic residues) spans 270 to 285; the sequence is NSSEKLPTELSKEEPS. Glycyl lysine isopeptide (Lys-Gly) (interchain with G-Cter in SUMO2) cross-links involve residues lysine 274 and lysine 281. Residue threonine 290 is modified to Phosphothreonine. Residues lysine 293 and lysine 297 each participate in a glycyl lysine isopeptide (Lys-Gly) (interchain with G-Cter in SUMO2) cross-link. Serine 301 carries the post-translational modification Phosphoserine. A compositionally biased stretch (low complexity) spans 301 to 320; the sequence is SLTPSKGKTSGTTSSSSDSS. Threonine 303 is subject to Phosphothreonine. The 2-1 repeat unit spans residues 386–389; sequence SLPA. A 2 X 4 AA repeats of S-L-P-A region spans residues 386–520; the sequence is SLPASLGRGW…DIEILSSLPA (135 aa). The interval 392-420 is required for interaction with SMN; sequence GRGWGREENLFSWKGAKGRGMRGRGRGRG. Serine 403 carries the post-translational modification Phosphoserine. 4 repeat units span residues 413–414, 415–416, 417–418, and 419–420. Positions 413–420 are 4 X 2 AA tandem repeats of R-G; that stretch reads RGRGRGRG. Lysine 444 participates in a covalent cross-link: Glycyl lysine isopeptide (Lys-Gly) (interchain with G-Cter in SUMO2). The residue at position 456 (threonine 456) is a Phosphothreonine. Residues 460-559 form the Tudor; atypical domain; that stretch reads DYSLLPLLAA…ITVFWKELID (100 aa). Serine 487 and serine 489 each carry phosphoserine. Residue lysine 496 forms a Glycyl lysine isopeptide (Lys-Gly) (interchain with G-Cter in SUMO2) linkage. Residues 517-520 form a 2-2 repeat; the sequence is SLPA. A Phosphoserine modification is found at serine 566.

It belongs to the coilin family. Interacts with ANKS1B. Interacts with SMN1 (via Tudor domain). Interacts (via C-terminus) with AK6. Interacts with WRAP53/TCAB1. Interacts with HMBOX1. Interacts with PSME3; the interaction is inhibited by PSME3IP1. Interacts wit UBL5. Post-translationally, symmetrical dimethylation of arginine residues within the RG repeat region enhances affinity for SMN, and thus localization of SMN complexes to CBs. Phosphorylated by VRK1. Phosphorylation during mitosis is associated with disassembly of CBs. As to expression, found in all the cell types examined.

The protein resides in the nucleus. It is found in the cajal body. Its function is as follows. Component of nuclear coiled bodies, also known as Cajal bodies or CBs, which are involved in the modification and assembly of nucleoplasmic snRNPs. The sequence is that of Coilin (COIL) from Homo sapiens (Human).